The chain runs to 208 residues: NAD(P)H-quinone oxidoreductase subunit I (208 aa).

4Fe-4S ferredoxin-type domains follow at residues glycine 55–valine 84 and arginine 95–glutamate 124. [4Fe-4S] cluster contacts are provided by cysteine 64, cysteine 67, cysteine 70, cysteine 74, cysteine 104, cysteine 107, cysteine 110, and cysteine 114.

It belongs to the complex I 23 kDa subunit family. NDH-1 is composed of at least 11 different subunits. It depends on [4Fe-4S] cluster as a cofactor.

The protein localises to the cellular thylakoid membrane. It catalyses the reaction a plastoquinone + NADH + (n+1) H(+)(in) = a plastoquinol + NAD(+) + n H(+)(out). The enzyme catalyses a plastoquinone + NADPH + (n+1) H(+)(in) = a plastoquinol + NADP(+) + n H(+)(out). NDH-1 shuttles electrons from an unknown electron donor, via FMN and iron-sulfur (Fe-S) centers, to quinones in the respiratory and/or the photosynthetic chain. The immediate electron acceptor for the enzyme in this species is believed to be plastoquinone. Couples the redox reaction to proton translocation, and thus conserves the redox energy in a proton gradient. This chain is NAD(P)H-quinone oxidoreductase subunit I, found in Prochlorococcus marinus (strain MIT 9515).